A 679-amino-acid polypeptide reads, in one-letter code: Stress-70 protein, mitochondrial (679 aa).

Residues 1-46 (MISASRAVAARLVGAAASRGPTAARHQDGWNGLSHEAFRIVSRRDY) constitute a mitochondrion transit peptide. The interaction with NFS1 stretch occupies residues 1–432 (MISASRAVAA…IQGGVLAGDV (432 aa)). ADP-binding residues include Thr63 and Asn64. The nucleotide-binding domain (NBD) stretch occupies residues 63-431 (TNSCVAVMEG…AIQGGVLAGD (369 aa)). Residue Lys76 is modified to N6-acetyllysine. At Thr87 the chain carries Phosphothreonine. Lys135 and Lys138 each carry N6-acetyllysine; alternate. An N6-succinyllysine; alternate mark is found at Lys135 and Lys138. Lys143 is subject to N6-acetyllysine. The residue at position 206 (Lys206) is an N6-acetyllysine; alternate. At Lys206 the chain carries N6-succinyllysine; alternate. At Lys206 the chain carries N6-malonyllysine; alternate. N6-acetyllysine is present on residues Lys234 and Lys288. An N6-acetyllysine; alternate modification is found at Lys300. Lys300 carries the post-translational modification N6-succinyllysine; alternate. The ADP site is built by Glu313, Lys316, and Ser320. Lys368 is subject to N6-succinyllysine. ADP is bound by residues Gly388 and Arg391. Position 394 is an N6-succinyllysine (Lys394). The residue at position 408 (Ser408) is a Phosphoserine. The tract at residues 432 to 441 (VTDVLLLDVT) is interdomain linker. An interaction with FXN and ISCU region spans residues 432–679 (VTDVLLLDVT…QKEDQKEEKQ (248 aa)). The segment at 442 to 679 (PLSLGIETLG…QKEDQKEEKQ (238 aa)) is substrate-binding domain (SBD). Arg513 carries the omega-N-methylarginine modification. Residues Lys567 and Lys600 each carry the N6-acetyllysine; alternate modification. An N6-succinyllysine; alternate mark is found at Lys567 and Lys600. N6-succinyllysine is present on Lys610. Lys612 bears the N6-acetyllysine mark. The residue at position 646 (Lys646) is an N6-acetyllysine; alternate. N6-succinyllysine; alternate is present on Lys646. Positions 656 to 679 (ASEREGSGSSGTGEQKEDQKEEKQ) are disordered. The span at 669–679 (EQKEDQKEEKQ) shows a compositional bias: basic and acidic residues.

This sequence belongs to the heat shock protein 70 family. In terms of assembly, interacts strongly with the intermediate form of FXN and weakly with its mature form. Interacts with HSCB. Associates with the mitochondrial contact site and cristae organizing system (MICOS) complex, composed of at least MICOS10/MIC10, CHCHD3/MIC19, CHCHD6/MIC25, APOOL/MIC27, IMMT/MIC60, APOO/MIC23/MIC26 and QIL1/MIC13. This complex was also known under the names MINOS or MitOS complex. The MICOS complex associates with mitochondrial outer membrane proteins SAMM50, MTX1, MTX2 and DNAJC11, mitochondrial inner membrane protein TMEM11 and with HSPA9. Interacts with DNLZ, the interaction is required to prevent self-aggregation. Interacts with TESPA1. Interacts with PDPN. Interacts with NFU1, NFS1 and ISCU. Interacts with TP53; the interaction promotes TP53 degradation. Interacts (via SBD domain) with UBXN2A; the interaction with UBXN2A inhibits HSPA9/MOT-2 interaction with and degradation of TP53, thereby promotes TP53 translocation to the nucleus. Interacts with ITPR1 AND VDAC1; this interaction couples ITPR1 to VDAC1. Component of the TIM23 mitochondrial inner membrane pre-sequence translocase complex.

The protein resides in the mitochondrion. The protein localises to the nucleus. It is found in the nucleolus. It localises to the cytoplasm. Its subcellular location is the mitochondrion matrix. It catalyses the reaction ATP + H2O = ADP + phosphate + H(+). The chaperone activity is regulated by ATP-induced allosteric coupling of the nucleotide-binding (NBD) and substrate-binding (SBD) domains. ATP binding in the nucleotide-binding pocket (NBP) leads to a conformational change in the NBD, which is transferred through the interdomain linker (IDL) to the substrate-binding domain (SBD). This elicits a reduced substrate affinity and a faster substrate exchange rate. Upon hydrolysis of ATP to ADP, the protein undergoes a conformational change that increases its affinity for substrate proteins. It cycles through repeated phases of ATP hydrolysis and nucleotide exchange, facilitating repeated cycles of substrate binding and release. Functions in collaboration with co-chaperones. Functions with the co-chaperone, DNLZ, to maintain solubility and regulate ATP hydrolysis. Nucleotide exchange factors, GRPEL1 and GRPEL2, accelerate nucleotide exchange. In terms of biological role, mitochondrial chaperone that plays a key role in mitochondrial protein import, folding, and assembly. Plays an essential role in the protein quality control system, the correct folding of proteins, the re-folding of misfolded proteins, and the targeting of proteins for subsequent degradation. These processes are achieved through cycles of ATP binding, ATP hydrolysis, and ADP release, mediated by co-chaperones. In mitochondria, it associates with the TIM (translocase of the inner membrane) protein complex to assist in the import and folding of mitochondrial proteins. Plays an important role in mitochondrial iron-sulfur cluster (ISC) biogenesis, interacts with and stabilizes ISC cluster assembly proteins FXN, NFU1, NFS1 and ISCU. Regulates erythropoiesis via stabilization of ISC assembly. Regulates mitochondrial calcium-dependent apoptosis by coupling two calcium channels, ITPR1 and VDAC1, at the mitochondria-associated endoplasmic reticulum (ER) membrane to facilitate calcium transport from the ER lumen to the mitochondria intermembrane space, providing calcium for the downstream calcium channel MCU, which releases it into the mitochondrial matrix. Although primarily located in the mitochondria, it is also found in other cellular compartments. In the cytosol, it associates with proteins involved in signaling, apoptosis, or senescence. It may play a role in cell cycle regulation via its interaction with and promotion of degradation of TP53. May play a role in the control of cell proliferation and cellular aging. Protects against reactive oxygen species (ROS). Extracellular HSPA9 plays a cytoprotective role by preventing cell lysis following immune attack by the membrane attack complex by disrupting formation of the complex. The sequence is that of Stress-70 protein, mitochondrial from Pongo abelii (Sumatran orangutan).